Consider the following 388-residue polypeptide: Flap endonuclease 1 (388 aa).

Positions 1–104 are N-domain; sequence MGILGLSKLI…GELAKRAERR (104 aa). Residue Asp-34 participates in Mg(2+) binding. DNA contacts are provided by Arg-47 and Arg-70. Asp-86, Glu-158, Glu-160, Asp-179, and Asp-181 together coordinate Mg(2+). The I-domain stretch occupies residues 122-253; that stretch reads EIEKFNRRLV…KRAIELIKTY (132 aa). Glu-158 serves as a coordination point for DNA. Residues Gly-231 and Asp-233 each contribute to the DNA site. Asp-233 is a Mg(2+) binding site. The tract at residues 336–344 is interaction with PCNA; sequence TQVRLDSFF. Residues 351-388 form a disordered region; the sequence is PNATAAAKRKAEEIKKSANNKKAKTSGGSGAARGRRPK.

The protein belongs to the XPG/RAD2 endonuclease family. FEN1 subfamily. As to quaternary structure, interacts with PCNA. Three molecules of FEN1 bind to one PCNA trimer with each molecule binding to one PCNA monomer. PCNA stimulates the nuclease activity without altering cleavage specificity. Requires Mg(2+) as cofactor. Post-translationally, phosphorylated. Phosphorylation upon DNA damage induces relocalization to the nuclear plasma.

It localises to the nucleus. Its subcellular location is the nucleolus. The protein localises to the nucleoplasm. The protein resides in the mitochondrion. Functionally, structure-specific nuclease with 5'-flap endonuclease and 5'-3' exonuclease activities involved in DNA replication and repair. During DNA replication, cleaves the 5'-overhanging flap structure that is generated by displacement synthesis when DNA polymerase encounters the 5'-end of a downstream Okazaki fragment. It enters the flap from the 5'-end and then tracks to cleave the flap base, leaving a nick for ligation. Also involved in the long patch base excision repair (LP-BER) pathway, by cleaving within the apurinic/apyrimidinic (AP) site-terminated flap. Acts as a genome stabilization factor that prevents flaps from equilibrating into structures that lead to duplications and deletions. Also possesses 5'-3' exonuclease activity on nicked or gapped double-stranded DNA, and exhibits RNase H activity. Also involved in replication and repair of rDNA and in repairing mitochondrial DNA. The polypeptide is Flap endonuclease 1 (Drosophila mojavensis (Fruit fly)).